The chain runs to 182 residues: MNELQVKFNEKVKQDIMKNFGYKSPMQIPRIKKIVINMTAGNEVSNTKAVEEVINELTLITGQTPYKTHAKKSLASFKIREGMPMGGKVTLRRDKMWDFLQKLIDIVIPRIRDFRGISPKSFDGRGNFALGIEEEIIFPEIDFDKIRRNKGLDVIIVTSANTDSEAKYLLEKLGMPFAKATN.

This sequence belongs to the universal ribosomal protein uL5 family. As to quaternary structure, part of the 50S ribosomal subunit; part of the 5S rRNA/L5/L18/L25 subcomplex. Contacts the 5S rRNA and the P site tRNA. Forms a bridge to the 30S subunit in the 70S ribosome.

This is one of the proteins that bind and probably mediate the attachment of the 5S RNA into the large ribosomal subunit, where it forms part of the central protuberance. In the 70S ribosome it contacts protein S13 of the 30S subunit (bridge B1b), connecting the 2 subunits; this bridge is implicated in subunit movement. Contacts the P site tRNA; the 5S rRNA and some of its associated proteins might help stabilize positioning of ribosome-bound tRNAs. The polypeptide is Large ribosomal subunit protein uL5 (Mycoplasma mobile (strain ATCC 43663 / 163K / NCTC 11711) (Mesomycoplasma mobile)).